Reading from the N-terminus, the 353-residue chain is Anthranilate phosphoribosyltransferase (353 aa).

5-phospho-alpha-D-ribose 1-diphosphate contacts are provided by residues G79, 82-83 (GD), T87, 89-92 (NIST), 107-115 (KHGNHSFTS), and S119. Anthranilate is bound at residue G79. S91 is a binding site for Mg(2+). Anthranilate is bound at residue N110. R165 contacts anthranilate. Mg(2+) is bound by residues D223 and E224.

This sequence belongs to the anthranilate phosphoribosyltransferase family. As to quaternary structure, homodimer. Mg(2+) is required as a cofactor.

It carries out the reaction N-(5-phospho-beta-D-ribosyl)anthranilate + diphosphate = 5-phospho-alpha-D-ribose 1-diphosphate + anthranilate. Its pathway is amino-acid biosynthesis; L-tryptophan biosynthesis; L-tryptophan from chorismate: step 2/5. Catalyzes the transfer of the phosphoribosyl group of 5-phosphorylribose-1-pyrophosphate (PRPP) to anthranilate to yield N-(5'-phosphoribosyl)-anthranilate (PRA). This Methanococcoides burtonii (strain DSM 6242 / NBRC 107633 / OCM 468 / ACE-M) protein is Anthranilate phosphoribosyltransferase.